A 277-amino-acid polypeptide reads, in one-letter code: Putative phosphoenolpyruvate synthase regulatory protein (277 aa).

157–164 (GVSRCGKT) is an ADP binding site.

Belongs to the pyruvate, phosphate/water dikinase regulatory protein family. PSRP subfamily.

It carries out the reaction [pyruvate, water dikinase] + ADP = [pyruvate, water dikinase]-phosphate + AMP + H(+). It catalyses the reaction [pyruvate, water dikinase]-phosphate + phosphate + H(+) = [pyruvate, water dikinase] + diphosphate. Bifunctional serine/threonine kinase and phosphorylase involved in the regulation of the phosphoenolpyruvate synthase (PEPS) by catalyzing its phosphorylation/dephosphorylation. The protein is Putative phosphoenolpyruvate synthase regulatory protein of Klebsiella pneumoniae subsp. pneumoniae (strain ATCC 700721 / MGH 78578).